We begin with the raw amino-acid sequence, 328 residues long: Nickel import system permease protein NikB (328 aa).

6 helical membrane passes run 11–31 (LMQM…LMKL), 104–124 (LLIS…LGII), 139–159 (VIST…LLFI), 170–190 (ILSQ…AYII), 229–249 (ILPI…GTVV), and 279–299 (VLFI…LTLL). Positions 100–297 (APITLLISFS…IINTIADLLT (198 aa)) constitute an ABC transmembrane type-1 domain.

Belongs to the binding-protein-dependent transport system permease family. OppBC subfamily. The complex is composed of two ATP-binding proteins (NikD and NikE), two transmembrane proteins (NikB and NikC) and a solute-binding protein (NikA).

The protein resides in the cell membrane. Functionally, part of the ABC transporter complex NikABCDE (Opp2) involved in nickel import. Probably responsible for the translocation of the substrate across the membrane. The protein is Nickel import system permease protein NikB of Staphylococcus aureus (strain bovine RF122 / ET3-1).